Here is a 389-residue protein sequence, read N- to C-terminus: Formate-dependent phosphoribosylglycinamide formyltransferase (389 aa).

N(1)-(5-phospho-beta-D-ribosyl)glycinamide-binding positions include 12-13 (EL) and Glu-72. Residues Arg-104, Lys-145, 150 to 155 (SSGKGQ), 185 to 188 (EEFI), and Glu-193 contribute to the ATP site. Residues 109–301 (DLAAKELGLK…EFELHLRAVL (193 aa)) enclose the ATP-grasp domain. Mg(2+) contacts are provided by Glu-258 and Glu-271. Residues Asp-278, Lys-350, and 357–358 (RR) contribute to the N(1)-(5-phospho-beta-D-ribosyl)glycinamide site.

Belongs to the PurK/PurT family. As to quaternary structure, homodimer.

It carries out the reaction N(1)-(5-phospho-beta-D-ribosyl)glycinamide + formate + ATP = N(2)-formyl-N(1)-(5-phospho-beta-D-ribosyl)glycinamide + ADP + phosphate + H(+). It functions in the pathway purine metabolism; IMP biosynthesis via de novo pathway; N(2)-formyl-N(1)-(5-phospho-D-ribosyl)glycinamide from N(1)-(5-phospho-D-ribosyl)glycinamide (formate route): step 1/1. Involved in the de novo purine biosynthesis. Catalyzes the transfer of formate to 5-phospho-ribosyl-glycinamide (GAR), producing 5-phospho-ribosyl-N-formylglycinamide (FGAR). Formate is provided by PurU via hydrolysis of 10-formyl-tetrahydrofolate. In Phocaeicola vulgatus (strain ATCC 8482 / DSM 1447 / JCM 5826 / CCUG 4940 / NBRC 14291 / NCTC 11154) (Bacteroides vulgatus), this protein is Formate-dependent phosphoribosylglycinamide formyltransferase.